The following is a 156-amino-acid chain: 6,7-dimethyl-8-ribityllumazine synthase (156 aa).

5-amino-6-(D-ribitylamino)uracil-binding positions include F23, 57 to 59 (AYE), and 81 to 83 (AVI). Residue 86–87 (ST) coordinates (2S)-2-hydroxy-3-oxobutyl phosphate. H89 serves as the catalytic Proton donor. Residue F114 participates in 5-amino-6-(D-ribitylamino)uracil binding. R128 provides a ligand contact to (2S)-2-hydroxy-3-oxobutyl phosphate.

The protein belongs to the DMRL synthase family.

The enzyme catalyses (2S)-2-hydroxy-3-oxobutyl phosphate + 5-amino-6-(D-ribitylamino)uracil = 6,7-dimethyl-8-(1-D-ribityl)lumazine + phosphate + 2 H2O + H(+). The protein operates within cofactor biosynthesis; riboflavin biosynthesis; riboflavin from 2-hydroxy-3-oxobutyl phosphate and 5-amino-6-(D-ribitylamino)uracil: step 1/2. Its function is as follows. Catalyzes the formation of 6,7-dimethyl-8-ribityllumazine by condensation of 5-amino-6-(D-ribitylamino)uracil with 3,4-dihydroxy-2-butanone 4-phosphate. This is the penultimate step in the biosynthesis of riboflavin. The chain is 6,7-dimethyl-8-ribityllumazine synthase from Helicobacter hepaticus (strain ATCC 51449 / 3B1).